We begin with the raw amino-acid sequence, 450 residues long: Glutamate-1-semialdehyde 2,1-aminomutase (450 aa).

N6-(pyridoxal phosphate)lysine is present on lysine 262.

The protein belongs to the class-III pyridoxal-phosphate-dependent aminotransferase family. HemL subfamily. Homodimer. The cofactor is pyridoxal 5'-phosphate.

The protein resides in the cytoplasm. It catalyses the reaction (S)-4-amino-5-oxopentanoate = 5-aminolevulinate. The protein operates within porphyrin-containing compound metabolism; protoporphyrin-IX biosynthesis; 5-aminolevulinate from L-glutamyl-tRNA(Glu): step 2/2. The protein is Glutamate-1-semialdehyde 2,1-aminomutase of Campylobacter hominis (strain ATCC BAA-381 / DSM 21671 / CCUG 45161 / LMG 19568 / NCTC 13146 / CH001A).